A 63-amino-acid polypeptide reads, in one-letter code: Putative ankyrin repeat protein RF_p14 (63 aa).

ANK repeat units follow at residues 11-43 and 44-63; these read KLNQ…CRDH and QGDT…ILDI.

The polypeptide is Putative ankyrin repeat protein RF_p14 (Rickettsia felis (strain ATCC VR-1525 / URRWXCal2) (Rickettsia azadi)).